Here is a 457-residue protein sequence, read N- to C-terminus: Ig mu chain C region (457 aa).

The CH1 stretch occupies residues 1-105 (SSSAPLLFPL…GEKEKKVELQ (105 aa)). Cysteine 27 and cysteine 89 form a disulfide bridge. N-linked (GlcNAc...) asparagine glycosylation is found at asparagine 45 and asparagine 113. The segment at 106–220 (VTPELPPNVS…KNVSSVCMGD (115 aa)) is CH2. Cysteine 136 and cysteine 200 are disulfide-bonded. N-linked (GlcNAc...) asparagine glycosylation is found at asparagine 212, asparagine 276, and asparagine 283. The tract at residues 221-326 (DTSTGISVFL…PLKQSLSRPK (106 aa)) is CH3. Intrachain disulfides connect cysteine 248/cysteine 307 and cysteine 355/cysteine 417. The segment at 327-457 (DVANDPPSVF…VLSDTASTCY (131 aa)) is CH4. Residue asparagine 444 is glycosylated (N-linked (GlcNAc...) asparagine).

The chain is Ig mu chain C region from Suncus murinus (Asian house shrew).